The following is a 403-amino-acid chain: Arginine biosynthesis bifunctional protein ArgJ (403 aa).

Thr-149, Lys-175, Thr-186, Glu-272, Asn-398, and Thr-403 together coordinate substrate. Thr-186 serves as the catalytic Nucleophile.

The protein belongs to the ArgJ family. In terms of assembly, heterotetramer of two alpha and two beta chains.

Its subcellular location is the cytoplasm. The catalysed reaction is N(2)-acetyl-L-ornithine + L-glutamate = N-acetyl-L-glutamate + L-ornithine. It carries out the reaction L-glutamate + acetyl-CoA = N-acetyl-L-glutamate + CoA + H(+). The protein operates within amino-acid biosynthesis; L-arginine biosynthesis; L-ornithine and N-acetyl-L-glutamate from L-glutamate and N(2)-acetyl-L-ornithine (cyclic): step 1/1. It functions in the pathway amino-acid biosynthesis; L-arginine biosynthesis; N(2)-acetyl-L-ornithine from L-glutamate: step 1/4. Catalyzes two activities which are involved in the cyclic version of arginine biosynthesis: the synthesis of N-acetylglutamate from glutamate and acetyl-CoA as the acetyl donor, and of ornithine by transacetylation between N(2)-acetylornithine and glutamate. In Caldanaerobacter subterraneus subsp. tengcongensis (strain DSM 15242 / JCM 11007 / NBRC 100824 / MB4) (Thermoanaerobacter tengcongensis), this protein is Arginine biosynthesis bifunctional protein ArgJ.